Here is a 566-residue protein sequence, read N- to C-terminus: 3-oxosteroid 1-dehydrogenase (566 aa).

Residue 10-39 (DVVVVGSGAAGMVAALVAAHRGLSTVVVEK) participates in FAD binding.

The protein belongs to the FAD-dependent oxidoreductase 2 family. 3-oxosteroid dehydrogenase subfamily. FAD is required as a cofactor.

It catalyses the reaction a 3-oxosteroid + A = a 3-oxo-Delta(1)-steroid + AH2. It carries out the reaction a 3-oxo-Delta(4)-steroid + A = a 3-oxo-Delta(1,4)-steroid + AH2. In terms of biological role, involved in the degradation of cholesterol. Catalyzes the elimination of the C-1 and C-2 hydrogen atoms of the A-ring from the polycyclic ring structure of 3-ketosteroids. Is also involved in the formation of 3-keto-1,4-diene-steroid from 3-keto-4-ene-steroid. The polypeptide is 3-oxosteroid 1-dehydrogenase (kstD) (Mycobacterium tuberculosis (strain CDC 1551 / Oshkosh)).